Consider the following 279-residue polypeptide: Digeranylgeranylglyceryl phosphate synthase (279 aa).

Helical transmembrane passes span 14-34 (VKNC…ASNF), 36-56 (FGLI…CGFG), 94-114 (LMIS…IALI), 131-153 (IIGN…ASVG), 157-175 (ITLI…REII), 201-221 (IFVA…PYIL), 224-244 (FGAP…LAVL), and 259-279 (SKYI…GSLM).

This sequence belongs to the UbiA prenyltransferase family. DGGGP synthase subfamily. The cofactor is Mg(2+).

It is found in the cell membrane. The catalysed reaction is sn-3-O-(geranylgeranyl)glycerol 1-phosphate + (2E,6E,10E)-geranylgeranyl diphosphate = 2,3-bis-O-(geranylgeranyl)-sn-glycerol 1-phosphate + diphosphate. It participates in membrane lipid metabolism; glycerophospholipid metabolism. Its function is as follows. Prenyltransferase that catalyzes the transfer of the geranylgeranyl moiety of geranylgeranyl diphosphate (GGPP) to the C2 hydroxyl of (S)-3-O-geranylgeranylglyceryl phosphate (GGGP). This reaction is the second ether-bond-formation step in the biosynthesis of archaeal membrane lipids. The chain is Digeranylgeranylglyceryl phosphate synthase from Methanococcus aeolicus (strain ATCC BAA-1280 / DSM 17508 / OCM 812 / Nankai-3).